The primary structure comprises 396 residues: MLHRCSRVLSQFLGRGNSKMLREAYSTSLHCVQAQEGMSVSPDVIAKIEEGYAKLQAAPECHSLLKKYLTKEVVDQLKDKKTKLGANLLDVIQSGVANLDSGVGVYAPDAEAYTLFKPLFDPLIQDYHNGFAPDAKQPNTDLGEGKTSALVDLDPEGKFINSTRIRCGRSLQGYPFNPCLSEANYLEMESKVKAIFDNITDPELAGKYFPLDGMTKEIQDQLIKDHFLFKEGDRFLQAANACRYWPKGRGIFHNNQKTFLIWCNEEDHLRIISMQEGGNVGQVLERLIKGVKTIEKQAPFSRDDRLGWLTFCPSNLGTTVRASVHIRLPKISAKPDFKSICDGLKLQIRGIHGEHSESEGGVYDISNKARLGLTEFEAVKQMYDGIAHLIALEKAA.

Positions 47-129 constitute a Phosphagen kinase N-terminal domain; the sequence is KIEEGYAKLQ…FDPLIQDYHN (83 aa). Position 102–106 (102–106) interacts with substrate; the sequence is GVGVY. Residues 159 to 396 enclose the Phosphagen kinase C-terminal domain; the sequence is FINSTRIRCG…AHLIALEKAA (238 aa). ATP is bound by residues 162 to 166 and histidine 226; that span reads STRIR. Glutamate 266 contributes to the substrate binding site. An ATP-binding site is contributed by arginine 270. Cysteine 312 lines the substrate pocket. Residues 321–325, 349–354, and aspartate 364 each bind ATP; these read RASVH and RGIHGE. Glutamate 354 serves as a coordination point for substrate.

This sequence belongs to the ATP:guanido phosphotransferase family.

It catalyses the reaction L-arginine + ATP = N(omega)-phospho-L-arginine + ADP + H(+). The sequence is that of Probable arginine kinase F46H5.3 from Caenorhabditis elegans.